The sequence spans 243 residues: Nuclear protein UL4 homolog (243 aa).

Residues 193 to 226 (RPDDQTTPTPTPHQYTSQRRQPETNCPSPQPAFF) are disordered. The span at 205 to 219 (HQYTSQRRQPETNCP) shows a compositional bias: polar residues.

It belongs to the alphaherpesvirinae HHV-1 UL4 family.

It localises to the host nucleus. The chain is Nuclear protein UL4 homolog from Varicella-zoster virus (strain Oka vaccine) (HHV-3).